The sequence spans 407 residues: Myeloid cell nuclear differentiation antigen (407 aa).

Positions 1 to 88 (MVNEYKKILL…VNNLRKEKSK (88 aa)) constitute a Pyrin domain. Residues 108-207 (EVGLAAPAPT…RQVDARRNVP (100 aa)) are disordered. A Nuclear localization signal motif is present at residues 131-137 (PVAQKRK). Over residues 139–148 (PNKEKTEAKR) the composition is skewed to basic and acidic residues. Residues 177–190 (QTSSSTPSNTSFTP) are compositionally biased toward low complexity. One can recognise an HIN-200 domain in the interval 196 to 394 (AQRQVDARRN…CGSHSFIKVI (199 aa)).

Participates in a ternary complex with YY1 and the YY1 target DNA element. Binds nucleolin and nucleophosmin/NPM/B23. Expressed constitutively in cells of the myeloid lineage. Found in promyelocyte stage cells as well as in all other stage cells including peripheral blood monocytes and granulocytes. Also appears in myeloblast cells in some cases of acute myeloid Leukemia.

Its subcellular location is the nucleus. It is found in the cytoplasm. Functionally, may act as a transcriptional activator/repressor in the myeloid lineage. Plays a role in the granulocyte/monocyte cell-specific response to interferon. Stimulates the DNA binding of the transcriptional repressor protein YY1. This is Myeloid cell nuclear differentiation antigen (MNDA) from Homo sapiens (Human).